The sequence spans 145 residues: Probable 4-amino-4-deoxy-L-arabinose-phosphoundecaprenol flippase subunit ArnF (145 aa).

Residues Met-1–His-3 lie on the Cytoplasmic side of the membrane. Residues Leu-4–Ala-24 form a helical membrane-spanning segment. Topologically, residues Gln-25–Pro-61 are periplasmic. The chain crosses the membrane as a helical span at residues Val-62 to Ala-82. Over Leu-83–Ser-89 the chain is Cytoplasmic. A helical membrane pass occupies residues Ile-90–Pro-110. Residues Trp-111 to Glu-114 are Periplasmic-facing. A helical membrane pass occupies residues Pro-115–Leu-135. Over Pro-136–Ser-145 the chain is Cytoplasmic.

It belongs to the ArnF family. Heterodimer of ArnE and ArnF.

It localises to the cell inner membrane. The protein operates within bacterial outer membrane biogenesis; lipopolysaccharide biosynthesis. Its function is as follows. Translocates 4-amino-4-deoxy-L-arabinose-phosphoundecaprenol (alpha-L-Ara4N-phosphoundecaprenol) from the cytoplasmic to the periplasmic side of the inner membrane. The protein is Probable 4-amino-4-deoxy-L-arabinose-phosphoundecaprenol flippase subunit ArnF of Shewanella sediminis (strain HAW-EB3).